The primary structure comprises 132 residues: Small ribosomal subunit protein uS8c (132 aa).

The protein belongs to the universal ribosomal protein uS8 family. Part of the 30S ribosomal subunit.

Its subcellular location is the plastid. It localises to the chloroplast. Functionally, one of the primary rRNA binding proteins, it binds directly to 16S rRNA central domain where it helps coordinate assembly of the platform of the 30S subunit. The protein is Small ribosomal subunit protein uS8c (rps8) of Liriodendron tulipifera (Tuliptree).